A 173-amino-acid chain; its full sequence is Alpha-crystallin A chain (173 aa).

Position 1 is an N-acetylmethionine (M1). The segment at 1-63 is required for complex formation with BFSP1 and BFSP2; that stretch reads MDVTIQHPWF…RTVLDSGISE (63 aa). Q6 is subject to Deamidated glutamine; partial. Residue S45 is modified to Phosphoserine. Deamidated glutamine; partial is present on Q50. One can recognise a sHSP domain in the interval 52-162; that stretch reads LFRTVLDSGI…GHSERAIPVS (111 aa). N6-acetyllysine is present on K70. Q90 carries the post-translational modification Deamidated glutamine; partial. K99 is modified (N6-acetyllysine). H100 serves as a coordination point for Zn(2+). Residue N101 is modified to Deamidated asparagine; partial. 2 residues coordinate Zn(2+): E102 and H107. S122 is modified (phosphoserine). N123 is modified (deamidated asparagine; partial). The disordered stretch occupies residues 145-173; that stretch reads KVQSGLDAGHSERAIPVSREEKPSSAPSS. Residue Q147 is modified to Deamidated glutamine; partial. The segment covering 153-167 has biased composition (basic and acidic residues); that stretch reads GHSERAIPVSREEKP. Position 154 (H154) interacts with Zn(2+). O-linked (GlcNAc) serine glycosylation occurs at S162.

Belongs to the small heat shock protein (HSP20) family. In terms of assembly, heteromer composed of three CRYAA and one CRYAB subunits. Inter-subunit bridging via zinc ions enhances stability, which is crucial as there is no protein turn over in the lens. Can also form homodimers and homotetramers (dimers of dimers) which serve as the building blocks of homooligomers. Within homooligomers, the zinc-binding motif is created from residues of 3 different molecules. His-100 and Glu-102 from one molecule are ligands of the zinc ion, and His-107 and His-154 residues from additional molecules complete the site with tetrahedral coordination geometry. Part of a complex required for lens intermediate filament formation composed of BFSP1, BFSP2 and CRYAA. In terms of processing, acetylation at Lys-70 may increase chaperone activity. Undergoes age-dependent proteolytical cleavage at the C-terminus.

The protein localises to the cytoplasm. It localises to the nucleus. Functionally, contributes to the transparency and refractive index of the lens. Acts as a chaperone, preventing aggregation of various proteins under a wide range of stress conditions. Required for the correct formation of lens intermediate filaments as part of a complex composed of BFSP1, BFSP2 and CRYAA. The sequence is that of Alpha-crystallin A chain (CRYAA) from Cavia porcellus (Guinea pig).